The following is a 486-amino-acid chain: Serine/threonine-protein kinase 4 (486 aa).

In terms of domain architecture, Protein kinase spans 29–280 (FDVLEKLGEG…AIQLLQHPFV (252 aa)). Residues 35-43 (LGEGSYGSV) and K58 each bind ATP. The active-site Proton acceptor is D148. At T182 the chain carries Phosphothreonine; by autocatalysis. Positions 288–324 (ILRDLINEAMDIKLKRQEAQQRELDQEDEENSEEDET) form a coiled coil. Residues 305–332 (EAQQRELDQEDEENSEEDETDSGTMVRA) are disordered. Residues 312-325 (DQEDEENSEEDETD) are compositionally biased toward acidic residues. One can recognise an SARAH domain in the interval 432 to 479 (YEFLKTWSVDELQRRLSALDPMMEQEIEEIRQKYQSKRQPILDAIEAK).

It belongs to the protein kinase superfamily. STE Ser/Thr protein kinase family. STE20 subfamily. Homodimer; mediated via the coiled-coil region. It depends on Mg(2+) as a cofactor. Proteolytically cleaved by caspase-3 during apoptosis at Asp-325 resulting in a 37 kDa form. Proteolytic cleavage results in kinase activation and nuclear translocation of the truncated form (MST1/N).

Its subcellular location is the cytoplasm. The protein localises to the nucleus. The catalysed reaction is L-seryl-[protein] + ATP = O-phospho-L-seryl-[protein] + ADP + H(+). It catalyses the reaction L-threonyl-[protein] + ATP = O-phospho-L-threonyl-[protein] + ADP + H(+). Its activity is regulated as follows. The C-terminal non-catalytic region inhibits the kinase activity, the enzyme is activated by caspase-cleavage. Homodimerization and autophosphorylation of Thr-182 is also required for full activation. Stress-activated, pro-apoptotic kinase which, following caspase-cleavage, enters the nucleus and induces chromatin condensation followed by internucleosomal DNA fragmentation. Key component of the Hippo signaling pathway which plays a pivotal role in organ size control and tumor suppression by restricting proliferation and promoting apoptosis. The core of this pathway is composed of a kinase cascade wherein STK3/MST2 and STK4/MST1, in complex with its regulatory protein SAV1, phosphorylates and activates LATS1/2 in complex with its regulatory protein MOB1, which in turn phosphorylates and inactivates YAP1 oncoprotein and WWTR1/TAZ. Phosphorylation of YAP1 by LATS2 inhibits its translocation into the nucleus to regulate cellular genes important for cell proliferation, cell death, and cell migration. Phosphorylates 'Ser-14' of histone H2B (H2BS14ph) during apoptosis. Phosphorylates FOXO3 upon oxidative stress, which results in its nuclear translocation and cell death initiation. The chain is Serine/threonine-protein kinase 4 (STK4) from Gallus gallus (Chicken).